The following is a 435-amino-acid chain: MLFPVLHLPKAMKFSSFSLIASSLLSLVAAAPVTLLKRDSRWDYANDKIYGVNIGGWLVLEPFITPSLFEAVSSDVPVDEYHYTEALGKEEAEKRLQEHWSTWIKEEDFKGMANAGLNFVRIPIGYWAFQLAEGDPYVQGQQEYLDKALEWCAKYGLKAWVDLHGAPGSQNGFDNSGKRGEIGWQNTTGYVDLTVQVLDQLTSKYGGSNYSDVIIGIELLNEPLGSYLDFDQLVDFYNKGYQLVRNNGNAPVIIHDAYLPDHTFDNVLNTEQDPNVWEVIVDHHHYQVFDEGSLSQSIDEHVSTACGWGQSENTEYHYSLCGEWTAALTDCAKWLNGAGRGARYDATFGGGNYIGSCDQLYTANYDYFTPEVISNYRRYVEAQMDSFLYGKNAGWVFWCWKTENTIEWDMQRLLGLGIIPQPLDDRQYPNQCGFS.

Positions 1–30 (MLFPVLHLPKAMKFSSFSLIASSLLSLVAA) are cleaved as a signal peptide. The active-site Proton donor is glutamate 222. 2 disulfides stabilise this stretch: cysteine 306/cysteine 432 and cysteine 331/cysteine 357. Residue glutamate 323 is the Nucleophile of the active site.

It belongs to the glycosyl hydrolase 5 (cellulase A) family.

It localises to the secreted. It catalyses the reaction Successive hydrolysis of beta-D-glucose units from the non-reducing ends of (1-&gt;3)-beta-D-glucans, releasing alpha-glucose.. Functionally, beta-glucanases participate in the metabolism of beta-glucan, the main structural component of the cell wall. It could also function biosynthetically as a transglycosylase. This chain is Glucan 1,3-beta-glucosidase, found in Pichia angusta (Yeast).